A 442-amino-acid polypeptide reads, in one-letter code: Chromosomal replication initiator protein DnaA (442 aa).

The tract at residues 1–84 is domain I, interacts with DnaA modulators; it reads MSVLWSHCIS…LEIGSRAAEA (84 aa). A domain II region spans residues 84 to 105; the sequence is AAQMRSANPPRKTAPARKQVPN. Residues 106-322 form a domain III, AAA+ region region; it reads NLNSAFIFGN…GALRRVIANA (217 aa). ATP is bound by residues Gly-150, Gly-152, Lys-153, and Thr-154. The interval 323-442 is domain IV, binds dsDNA; it reads QFTGRPITLE…FSNLLRILSN (120 aa).

It belongs to the DnaA family. As to quaternary structure, oligomerizes as a right-handed, spiral filament on DNA at oriC.

It localises to the cytoplasm. Its function is as follows. Plays an essential role in the initiation and regulation of chromosomal replication. ATP-DnaA binds to the origin of replication (oriC) to initiate formation of the DNA replication initiation complex once per cell cycle. Binds the DnaA box (a 9 base pair repeat at the origin) and separates the double-stranded (ds)DNA. Forms a right-handed helical filament on oriC DNA; dsDNA binds to the exterior of the filament while single-stranded (ss)DNA is stabiized in the filament's interior. The ATP-DnaA-oriC complex binds and stabilizes one strand of the AT-rich DNA unwinding element (DUE), permitting loading of DNA polymerase. After initiation quickly degrades to an ADP-DnaA complex that is not apt for DNA replication. Binds acidic phospholipids. The sequence is that of Chromosomal replication initiator protein DnaA from Methylococcus capsulatus (strain ATCC 33009 / NCIMB 11132 / Bath).